A 340-amino-acid chain; its full sequence is MSWSRSILCLLGAFANARSIPYYPPLSSDLVNHINKLNTTGRAGHNFHNTDMSYVKKLCGTFLGGPKAPERVDFAEDMDLPDTFDTRKQWPNCPTISEIRDQGSCGSCWAFGAVEAISDRICVHTNAKVSVEVSAEDLLSCCGFECGMGCNGGYPSGAWRYWTERGLVSGGLYDSHVGCRAYTIPPCEHHVNGSRPPCTGEGGETPRCSRHCEPGYSPSYKEDKHYGITSYGVPRSEKEIMAEIYKNGPVEGAFIVYEDFLMYKSGVYQHVSGEQVGGHAIRILGWGVENGTPYWLAANSWNTDWGITGFFKILRGEDHCGIESEIVAGVPRMEQYWTRV.

The signal sequence occupies residues 1–17; sequence MSWSRSILCLLGAFANA. The propeptide at 18-79 is activation peptide; it reads RSIPYYPPLS…ERVDFAEDMD (62 aa). Asn-38 is a glycosylation site (N-linked (GlcNAc...) asparagine). 6 disulfide bridges follow: Cys-93–Cys-122, Cys-105–Cys-150, Cys-141–Cys-208, Cys-142–Cys-146, Cys-179–Cys-212, and Cys-187–Cys-198. The active site involves Cys-108. An N-linked (GlcNAc...) asparagine glycan is attached at Asn-192. Residues His-279 and Asn-299 contribute to the active site.

This sequence belongs to the peptidase C1 family. Dimer of a heavy chain and a light chain cross-linked by a disulfide bond.

Its subcellular location is the lysosome. It catalyses the reaction Hydrolysis of proteins with broad specificity for peptide bonds. Preferentially cleaves -Arg-Arg-|-Xaa bonds in small molecule substrates (thus differing from cathepsin L). In addition to being an endopeptidase, shows peptidyl-dipeptidase activity, liberating C-terminal dipeptides.. Thiol protease which is believed to participate in intracellular degradation and turnover of proteins. Has also been implicated in tumor invasion and metastasis. This is Cathepsin B (CTSB) from Gallus gallus (Chicken).